The primary structure comprises 590 residues: Acyl-CoA ligase sidI (590 aa).

Positions 6 to 14 (RLQQTLSHL) match the PTS2-type peroxisomal targeting signal motif. ATP-binding positions include 220-228 (TSGSTGNPK), 359-364 (SSYGLT), aspartate 449, and arginine 464. Substrate is bound at residue threonine 364. CoA contacts are provided by residues 472–474 (GGE) and 543–545 (YFF). Lysine 563 is a binding site for ATP.

Belongs to the ATP-dependent AMP-binding enzyme family.

The protein localises to the peroxisome. It participates in siderophore biosynthesis. Acyl-CoA ligase; part of the siderophore biosynthetic pathway. Aspergillus fumigatus produces 4 types of siderophores, low-molecular-mass iron chelators, including excreted fusarinine C (FsC) and triacetylfusarinine C (TAFC) for iron uptake and intacellular ferricrocin (FC) for hyphal and hydroxyferricrocin (HFC) for conidial iron distribution and storage. TAFC consists of 3 N(2)-acetyl-N(5)-anhydromevalonyl-N(5)-hydroxyornithine residues cyclically linked by ester bonds; FC is a cyclic hexapeptide with the structure Gly-Ser-Gly-(N(5)-acetyl-N(5)-hydroxyornithine)x3. The biosynthesis of all four siderophores depends on the hydroxylation of ornithine, catalyzed by the monooxygenase sidA. Subsequently, the pathways for biosynthesis of extra- and intracellular siderophores split. For biosynthesis of extracellular siderophores, the transacylase sidF transfers anhydromevalonyl to N(5)-hydroxyornithine. The required anhydromevalonyl-CoA moiety is derived from mevalonate by CoA ligation and dehydration catalyzed by sidI and sidH respectively. The acetylation of N(5)-hydroxyornithine for FC biosynthesis involves the constitutively expressed sidL. FC is hydroxylated to HFC by an as yet uncharacterized enzyme during conidiation. Assembly of fusarinine C (FsC) and FC is catalyzed by two different nonribosomal peptide synthetases (NRPS), sidD and sidC respectively. Subsequently, sidG catalyzes N2-acetylation of FsC for forming TAFC. Both extra- and intracellular siderophores are crucial for growth during iron limitation and virulence. The chain is Acyl-CoA ligase sidI from Aspergillus fumigatus (strain ATCC MYA-4609 / CBS 101355 / FGSC A1100 / Af293) (Neosartorya fumigata).